A 123-amino-acid chain; its full sequence is Large ribosomal subunit protein bL12 (123 aa).

The protein belongs to the bacterial ribosomal protein bL12 family. As to quaternary structure, homodimer. Part of the ribosomal stalk of the 50S ribosomal subunit. Forms a multimeric L10(L12)X complex, where L10 forms an elongated spine to which 2 to 4 L12 dimers bind in a sequential fashion. Binds GTP-bound translation factors.

In terms of biological role, forms part of the ribosomal stalk which helps the ribosome interact with GTP-bound translation factors. Is thus essential for accurate translation. The polypeptide is Large ribosomal subunit protein bL12 (Roseobacter denitrificans (strain ATCC 33942 / OCh 114) (Erythrobacter sp. (strain OCh 114))).